A 252-amino-acid chain; its full sequence is Indole-3-glycerol phosphate synthase (252 aa).

Belongs to the TrpC family.

It carries out the reaction 1-(2-carboxyphenylamino)-1-deoxy-D-ribulose 5-phosphate + H(+) = (1S,2R)-1-C-(indol-3-yl)glycerol 3-phosphate + CO2 + H2O. It participates in amino-acid biosynthesis; L-tryptophan biosynthesis; L-tryptophan from chorismate: step 4/5. This Listeria monocytogenes serotype 4b (strain CLIP80459) protein is Indole-3-glycerol phosphate synthase.